Here is a 183-residue protein sequence, read N- to C-terminus: TATA-box-binding protein 1 (183 aa).

Tandem repeats lie at residues 8–84 (IENV…AKKL) and 99–177 (VQNI…RQQL).

It belongs to the TBP family.

Functionally, general factor that plays a role in the activation of archaeal genes transcribed by RNA polymerase. Binds specifically to the TATA box promoter element which lies close to the position of transcription initiation. The polypeptide is TATA-box-binding protein 1 (Methanosarcina acetivorans (strain ATCC 35395 / DSM 2834 / JCM 12185 / C2A)).